The following is a 384-amino-acid chain: Bifunctional enzyme IspD/IspF (384 aa).

The tract at residues 1-226 (MAKTVVLVVA…RCLFDGPGEV (226 aa)) is 2-C-methyl-D-erythritol 4-phosphate cytidylyltransferase. Residues 227 to 384 (RSASGYDVHR…QAMASVWLPR (158 aa)) form a 2-C-methyl-D-erythritol 2,4-cyclodiphosphate synthase region. Positions 233 and 235 each coordinate a divalent metal cation. 4-CDP-2-C-methyl-D-erythritol 2-phosphate-binding positions include 233 to 235 (DVH) and 260 to 261 (HS). Histidine 268 is a binding site for a divalent metal cation. 4-CDP-2-C-methyl-D-erythritol 2-phosphate is bound by residues 282 to 284 (DIG), 358 to 361 (TTTE), phenylalanine 365, and arginine 368.

It in the N-terminal section; belongs to the IspD/TarI cytidylyltransferase family. IspD subfamily. In the C-terminal section; belongs to the IspF family. A divalent metal cation serves as cofactor.

It catalyses the reaction 2-C-methyl-D-erythritol 4-phosphate + CTP + H(+) = 4-CDP-2-C-methyl-D-erythritol + diphosphate. It carries out the reaction 4-CDP-2-C-methyl-D-erythritol 2-phosphate = 2-C-methyl-D-erythritol 2,4-cyclic diphosphate + CMP. Its pathway is isoprenoid biosynthesis; isopentenyl diphosphate biosynthesis via DXP pathway; isopentenyl diphosphate from 1-deoxy-D-xylulose 5-phosphate: step 2/6. The protein operates within isoprenoid biosynthesis; isopentenyl diphosphate biosynthesis via DXP pathway; isopentenyl diphosphate from 1-deoxy-D-xylulose 5-phosphate: step 4/6. Bifunctional enzyme that catalyzes the formation of 4-diphosphocytidyl-2-C-methyl-D-erythritol from CTP and 2-C-methyl-D-erythritol 4-phosphate (MEP) (IspD), and catalyzes the conversion of 4-diphosphocytidyl-2-C-methyl-D-erythritol 2-phosphate (CDP-ME2P) to 2-C-methyl-D-erythritol 2,4-cyclodiphosphate (ME-CPP) with a corresponding release of cytidine 5-monophosphate (CMP) (IspF). This chain is Bifunctional enzyme IspD/IspF, found in Paramagnetospirillum magneticum (strain ATCC 700264 / AMB-1) (Magnetospirillum magneticum).